A 197-amino-acid polypeptide reads, in one-letter code: Small ribosomal subunit protein eS1 (197 aa).

Belongs to the eukaryotic ribosomal protein eS1 family.

This Methanoculleus marisnigri (strain ATCC 35101 / DSM 1498 / JR1) protein is Small ribosomal subunit protein eS1.